A 401-amino-acid polypeptide reads, in one-letter code: Membrane protein UL43 homolog (401 aa).

10 helical membrane passes run 43–63, 67–87, 93–113, 124–144, 159–179, 182–202, 259–279, 294–314, 332–352, and 379–399; these read FVGI…IDLL, STCL…RVPI, IVTV…SVWV, LIVV…ISLF, ASLL…LVEL, VPIG…FGLA, PGVI…WIVL, YVVF…QLVI, AVCM…SLAF, and ISRW…ATII.

This sequence belongs to the alphaherpesvirinae HHV-1 UL43 family.

The protein resides in the membrane. In Equine herpesvirus 1 (strain Ab4p) (EHV-1), this protein is Membrane protein UL43 homolog.